The following is a 402-amino-acid chain: uncharacterized protein (402 aa).

Positions 332–402 (MFSSSSSSSE…PEPPPGKPGR (71 aa)) are disordered. Positions 370–379 (SETTSLQQYS) are enriched in polar residues. Positions 393–402 (PEPPPGKPGR) are enriched in pro residues.

This is an uncharacterized protein from Mus musculus (Mouse).